The chain runs to 278 residues: Orotidine 5'-phosphate decarboxylase (278 aa).

The active-site Proton donor is lysine 96.

Belongs to the OMP decarboxylase family. Type 2 subfamily.

The enzyme catalyses orotidine 5'-phosphate + H(+) = UMP + CO2. The protein operates within pyrimidine metabolism; UMP biosynthesis via de novo pathway; UMP from orotate: step 2/2. The chain is Orotidine 5'-phosphate decarboxylase from Salinispora arenicola (strain CNS-205).